Here is a 487-residue protein sequence, read N- to C-terminus: uncharacterized protein (487 aa).

It belongs to the UbiD family.

This is an uncharacterized protein from Aeropyrum pernix (strain ATCC 700893 / DSM 11879 / JCM 9820 / NBRC 100138 / K1).